The sequence spans 575 residues: Dihydroxy-acid dehydratase (575 aa).

A disordered region spans residues 1–25; that stretch reads MPTTDSARAADIKQPDIKPRSRDVT. Residues 8 to 25 are compositionally biased toward basic and acidic residues; sequence RAADIKQPDIKPRSRDVT. Cys-64 contacts [2Fe-2S] cluster. Asp-96 is a binding site for Mg(2+). Cys-137 provides a ligand contact to [2Fe-2S] cluster. Mg(2+) contacts are provided by Asp-138 and Lys-139. An N6-carboxylysine modification is found at Lys-139. [2Fe-2S] cluster is bound at residue Cys-214. Glu-465 contributes to the Mg(2+) binding site. Catalysis depends on Ser-491, which acts as the Proton acceptor.

Belongs to the IlvD/Edd family. As to quaternary structure, homodimer. Requires [2Fe-2S] cluster as cofactor. Mg(2+) is required as a cofactor.

The enzyme catalyses (2R)-2,3-dihydroxy-3-methylbutanoate = 3-methyl-2-oxobutanoate + H2O. The catalysed reaction is (2R,3R)-2,3-dihydroxy-3-methylpentanoate = (S)-3-methyl-2-oxopentanoate + H2O. It functions in the pathway amino-acid biosynthesis; L-isoleucine biosynthesis; L-isoleucine from 2-oxobutanoate: step 3/4. The protein operates within amino-acid biosynthesis; L-valine biosynthesis; L-valine from pyruvate: step 3/4. Its function is as follows. Functions in the biosynthesis of branched-chain amino acids. Catalyzes the dehydration of (2R,3R)-2,3-dihydroxy-3-methylpentanoate (2,3-dihydroxy-3-methylvalerate) into 2-oxo-3-methylpentanoate (2-oxo-3-methylvalerate) and of (2R)-2,3-dihydroxy-3-methylbutanoate (2,3-dihydroxyisovalerate) into 2-oxo-3-methylbutanoate (2-oxoisovalerate), the penultimate precursor to L-isoleucine and L-valine, respectively. The chain is Dihydroxy-acid dehydratase from Mycobacterium avium (strain 104).